We begin with the raw amino-acid sequence, 148 residues long: Endothelial differentiation-related factor 1 homolog (148 aa).

A disordered region spans residues 1–26 (MAESDWDTVTVLRKKGPSAAQAKSKQ). Residues 81–135 (IQQGRQSKGMTQKDLATKINEKPQVIADYESGRAIPNNQVMGKIERAIGLKLRGK) form the HTH cro/C1-type domain. Positions 92-111 (QKDLATKINEKPQVIADYES) form a DNA-binding region, H-T-H motif.

It is found in the nucleus. In terms of biological role, probable transcriptional coactivator. The chain is Endothelial differentiation-related factor 1 homolog (EDF1) from Gallus gallus (Chicken).